The chain runs to 110 residues: Protein YcgL (110 aa).

In terms of domain architecture, YcgL spans 14–98; that stretch reads MFCVIYRSSK…PPEDLLKQHL (85 aa).

This chain is Protein YcgL, found in Salmonella arizonae (strain ATCC BAA-731 / CDC346-86 / RSK2980).